Here is a 91-residue protein sequence, read N- to C-terminus: Large ribosomal subunit protein uL23c (91 aa).

The protein belongs to the universal ribosomal protein uL23 family. In terms of assembly, part of the 50S ribosomal subunit.

Its subcellular location is the plastid. The protein localises to the chloroplast. Binds to 23S rRNA. In Pinus thunbergii (Japanese black pine), this protein is Large ribosomal subunit protein uL23c (rpl23).